A 478-amino-acid polypeptide reads, in one-letter code: ATP synthase subunit beta (478 aa).

Residue 151–158 participates in ATP binding; it reads GGAGVGKT.

Belongs to the ATPase alpha/beta chains family. In terms of assembly, F-type ATPases have 2 components, CF(1) - the catalytic core - and CF(0) - the membrane proton channel. CF(1) has five subunits: alpha(3), beta(3), gamma(1), delta(1), epsilon(1). CF(0) has three main subunits: a(1), b(2) and c(9-12). The alpha and beta chains form an alternating ring which encloses part of the gamma chain. CF(1) is attached to CF(0) by a central stalk formed by the gamma and epsilon chains, while a peripheral stalk is formed by the delta and b chains.

Its subcellular location is the cell inner membrane. It catalyses the reaction ATP + H2O + 4 H(+)(in) = ADP + phosphate + 5 H(+)(out). In terms of biological role, produces ATP from ADP in the presence of a proton gradient across the membrane. The catalytic sites are hosted primarily by the beta subunits. In Azorhizobium caulinodans (strain ATCC 43989 / DSM 5975 / JCM 20966 / LMG 6465 / NBRC 14845 / NCIMB 13405 / ORS 571), this protein is ATP synthase subunit beta.